The following is a 28-amino-acid chain: Dermaseptin-1 (28 aa).

Residue Gln-28 is modified to Glutamine amide.

As to expression, expressed by the skin glands.

The protein localises to the secreted. Has antimicrobial activity. This is Dermaseptin-1 from Phyllomedusa tomopterna (Tiger-striped leaf frog).